Reading from the N-terminus, the 247-residue chain is Thioredoxin reductase-like selenoprotein T homolog selt-1.1 (247 aa).

The first 26 residues, Met1–Ala26, serve as a signal peptide directing secretion. A disulfide bridge connects residues Cys92 and Cys95.

Belongs to the SelWTH family. SELT subfamily. In terms of tissue distribution, broadly expressed in neurons of nervous system including ADL, ASH, ASI, ASJ, ASK and AWB amphid sensilla neurons, in epithelial cells including hypodermal, arcade, pharyngeal, vulval and rectal cells, and in somatic muscle cells of the head, neck and body wall, and non-striated pharyngeal muscles.

It localises to the endoplasmic reticulum. It catalyses the reaction [thioredoxin]-dithiol + NADP(+) = [thioredoxin]-disulfide + NADPH + H(+). Probably has thioredoxin reductase-like oxidoreductase activity. Plays a role in regulating the oxidative stress response, and odorant and pathogenic bacteria avoidance behavior. In Caenorhabditis elegans, this protein is Thioredoxin reductase-like selenoprotein T homolog selt-1.1.